The sequence spans 353 residues: MTLSTNHVYPVIWHNGAVSLIDQTRLPNEYTFVEIHRSEDMARAIKTMIVRGAPAIGVAAAYGMYLGAREIETSDRHEFLQNLDKVAQLLGSTRPTAVNLFWAISRMMKVAKETLGTVEDIKQTLFQTAQAINVEDLQTCQAIGDNGLTVLPASPEKLTLLTHCNAGALATAGYGTALGVVRSAWREGRLERLFADETRPRLQGAKLTAWECVQEGIPVTLITDNMAAHCMKQGLIHAVVVGADRIAANGDTANKIGTYSVAIAAKAHNIPFFVAAPLSTVDFELADGSKIPIEERDPTEIYQVGDTILTPEGVDFYNPAFDVTPAELITAIITENGAIAPGELVKLQLKQLV.

Substrate contacts are provided by residues 51-53 (RGA), Arg-94, and Gln-203. The active-site Proton donor is the Asp-244. Substrate is bound at residue 254–255 (NK).

It belongs to the eIF-2B alpha/beta/delta subunits family. MtnA subfamily.

It carries out the reaction 5-(methylsulfanyl)-alpha-D-ribose 1-phosphate = 5-(methylsulfanyl)-D-ribulose 1-phosphate. It functions in the pathway amino-acid biosynthesis; L-methionine biosynthesis via salvage pathway; L-methionine from S-methyl-5-thio-alpha-D-ribose 1-phosphate: step 1/6. Functionally, catalyzes the interconversion of methylthioribose-1-phosphate (MTR-1-P) into methylthioribulose-1-phosphate (MTRu-1-P). In Nostoc punctiforme (strain ATCC 29133 / PCC 73102), this protein is Methylthioribose-1-phosphate isomerase.